We begin with the raw amino-acid sequence, 443 residues long: MENAKMNSLIAQYPLVKDLVALQETTWFNPGTTSLAEGLPYVGLTEQDVQDAHARLSRFAPYLAKAFPETAATGGIIESELVAIPAMQKRLEKEYQQPISGQLLLKKDSHLPISGSIKARGGIYEVLAHAEKLALEAGLLTLEDDYSKLLSPEFKQFFSQYSIAVGSTGNLGLSIGIMSARIGFKVTVHMSADARAWKKAKLRSHGVTVVEYEQDYGVAVEEGRKAAQSDPNCFFIDDENSRTLFLGYSVAGQRLKAQFAEQGRIVDADNPLFVYLPCGVGGGPGGVAFGLKLAFGDHVHCFFAEPTHSPCMLLGVHTGLHDQISVQDIGIDNLTAADGLAVGRASGFVGRAMERLLDGFYTLSDQTMYDMLGWLAQEEGIRLEPSALAGMAGPQRVCASVSYQQMHGFSAEQLRNATHLVWATGGGMVPEEEMEQYLAKGRS.

Residue Lys118 is modified to N6-(pyridoxal phosphate)lysine.

Belongs to the serine/threonine dehydratase family. DsdA subfamily. In terms of assembly, monomer. Pyridoxal 5'-phosphate serves as cofactor.

It carries out the reaction D-serine = pyruvate + NH4(+). The protein is D-serine dehydratase of Escherichia coli O17:K52:H18 (strain UMN026 / ExPEC).